The chain runs to 327 residues: Movement protein (327 aa).

The stretch at 297–327 (SASSSNTENELARVSQNIDLLKNKLKEICGE) forms a coiled coil.

It belongs to the caulimoviridae movement protein family. As to quaternary structure, homotrimer, through the coiled-coil domain. Interacts with VAP. May interact (via N-terminus) with host prenylated Rab acceptor protein 1D (PRA1D).

The protein localises to the host cell junction. It is found in the host plasmodesma. Its function is as follows. Transports viral genome to neighboring plant cells directly through plasmosdesmata, without any budding. The movement protein allows efficient cell to cell propagation, by bypassing the host cell wall barrier. Acts by forming tubules structures that increase the size exclusion limit (SEL) of plasmodesmata, thereby allowing viral ribonucleocapsids to spread directly to neighboring cells. This is Movement protein from Arabidopsis thaliana (Mouse-ear cress).